Here is a 209-residue protein sequence, read N- to C-terminus: Thymidylate kinase (209 aa).

Position 13–20 (13–20 (GLEGAGKS)) interacts with ATP.

It belongs to the thymidylate kinase family.

It catalyses the reaction dTMP + ATP = dTDP + ADP. Its function is as follows. Phosphorylation of dTMP to form dTDP in both de novo and salvage pathways of dTTP synthesis. This Shewanella sp. (strain ANA-3) protein is Thymidylate kinase.